A 561-amino-acid polypeptide reads, in one-letter code: Ribulokinase (561 aa).

The protein belongs to the ribulokinase family.

The enzyme catalyses D-ribulose + ATP = D-ribulose 5-phosphate + ADP + H(+). It catalyses the reaction L-ribulose + ATP = L-ribulose 5-phosphate + ADP + H(+). Its pathway is carbohydrate degradation; L-arabinose degradation via L-ribulose; D-xylulose 5-phosphate from L-arabinose (bacterial route): step 2/3. This is Ribulokinase from Shouchella clausii (strain KSM-K16) (Alkalihalobacillus clausii).